A 250-amino-acid chain; its full sequence is 5-oxoprolinase subunit A (250 aa).

The protein belongs to the LamB/PxpA family. Forms a complex composed of PxpA, PxpB and PxpC.

The enzyme catalyses 5-oxo-L-proline + ATP + 2 H2O = L-glutamate + ADP + phosphate + H(+). Functionally, catalyzes the cleavage of 5-oxoproline to form L-glutamate coupled to the hydrolysis of ATP to ADP and inorganic phosphate. The sequence is that of 5-oxoprolinase subunit A from Streptomyces coelicolor (strain ATCC BAA-471 / A3(2) / M145).